We begin with the raw amino-acid sequence, 280 residues long: MLSKAHAKINLSLDVIGKRKDGYHLLKMLMQTIDLYDLIEIKKIKKDIIIDCDREYIPKDRRNLAYKAATLFLDRYNIDSGVRINITKNIPVAAGLAGGSTDAATVLKIMRDIFEPDISNEELKEIALDIGADVPFCIEGGTALCEGIGEKITPIKNFKNHILVLVKPNFGLSTKDVYNNLKVEKIYIHPNTTKLIQSIEEDNLKSVARNMRNVLENVTLRKYKALNSIKSNFIELGALGSMMSGSGPSVFGLFDDMLKAQICYDNMREKYKEVFITRTI.

Residue K8 is part of the active site. 91–101 contributes to the ATP binding site; it reads PVAAGLAGGST. The active site involves D133.

Belongs to the GHMP kinase family. IspE subfamily.

It carries out the reaction 4-CDP-2-C-methyl-D-erythritol + ATP = 4-CDP-2-C-methyl-D-erythritol 2-phosphate + ADP + H(+). The protein operates within isoprenoid biosynthesis; isopentenyl diphosphate biosynthesis via DXP pathway; isopentenyl diphosphate from 1-deoxy-D-xylulose 5-phosphate: step 3/6. Catalyzes the phosphorylation of the position 2 hydroxy group of 4-diphosphocytidyl-2C-methyl-D-erythritol. The protein is 4-diphosphocytidyl-2-C-methyl-D-erythritol kinase of Clostridium botulinum (strain ATCC 19397 / Type A).